Here is a 226-residue protein sequence, read N- to C-terminus: ATP-dependent dethiobiotin synthetase BioD (226 aa).

12 to 17 (GVGKTV) serves as a coordination point for ATP. Thr16 serves as a coordination point for Mg(2+). Residue Lys37 is part of the active site. Thr41 provides a ligand contact to substrate. ATP is bound by residues Asp49, 108 to 111 (EGAG), and 197 to 199 (PAG). Positions 49 and 108 each coordinate Mg(2+).

Belongs to the dethiobiotin synthetase family. In terms of assembly, homodimer. Mg(2+) is required as a cofactor.

It is found in the cytoplasm. It catalyses the reaction (7R,8S)-7,8-diammoniononanoate + CO2 + ATP = (4R,5S)-dethiobiotin + ADP + phosphate + 3 H(+). It participates in cofactor biosynthesis; biotin biosynthesis; biotin from 7,8-diaminononanoate: step 1/2. Functionally, catalyzes a mechanistically unusual reaction, the ATP-dependent insertion of CO2 between the N7 and N8 nitrogen atoms of 7,8-diaminopelargonic acid (DAPA, also called 7,8-diammoniononanoate) to form a ureido ring. This Mycobacterium avium (strain 104) protein is ATP-dependent dethiobiotin synthetase BioD.